The chain runs to 316 residues: Olfactory receptor 10H28 (316 aa).

Topologically, residues methionine 1–proline 26 are extracellular. Asparagine 5 carries N-linked (GlcNAc...) asparagine glycosylation. The helical transmembrane segment at alanine 27 to methionine 47 threads the bilayer. Residues alanine 48 to histidine 57 lie on the Cytoplasmic side of the membrane. Residues threonine 58–isoleucine 78 traverse the membrane as a helical segment. The Extracellular segment spans residues threonine 79–asparagine 100. Cysteine 98 and cysteine 190 form a disulfide bridge. The chain crosses the membrane as a helical span at residues glutamine 101–tyrosine 121. Over aspartate 122–arginine 144 the chain is Cytoplasmic. A helical membrane pass occupies residues leucine 145–phenylalanine 165. The Extracellular segment spans residues histidine 166–threonine 207. A helical transmembrane segment spans residues proline 208–leucine 228. Topologically, residues arginine 229–serine 241 are cytoplasmic. Residues threonine 242–leucine 262 traverse the membrane as a helical segment. The Extracellular portion of the chain corresponds to lysine 263–aspartate 273. Residues threonine 274–leucine 294 traverse the membrane as a helical segment. The Cytoplasmic portion of the chain corresponds to arginine 295–isoleucine 316.

It belongs to the G-protein coupled receptor 1 family.

It localises to the cell membrane. Its function is as follows. Odorant receptor. The chain is Olfactory receptor 10H28 from Mus musculus (Mouse).